A 152-amino-acid chain; its full sequence is Large ribosomal subunit protein bL9 (152 aa).

Belongs to the bacterial ribosomal protein bL9 family.

Binds to the 23S rRNA. This is Large ribosomal subunit protein bL9 from Gloeothece citriformis (strain PCC 7424) (Cyanothece sp. (strain PCC 7424)).